Reading from the N-terminus, the 214-residue chain is 3,4-dihydroxy-2-butanone 4-phosphate synthase (214 aa).

D-ribulose 5-phosphate contacts are provided by residues 40-41 (RE), Asp45, 153-157 (RRGHT), and Glu177. Glu41 is a binding site for Mg(2+). A Mg(2+)-binding site is contributed by His156.

The protein belongs to the DHBP synthase family. As to quaternary structure, homodimer. The cofactor is Mg(2+). Mn(2+) is required as a cofactor.

The enzyme catalyses D-ribulose 5-phosphate = (2S)-2-hydroxy-3-oxobutyl phosphate + formate + H(+). The protein operates within cofactor biosynthesis; riboflavin biosynthesis; 2-hydroxy-3-oxobutyl phosphate from D-ribulose 5-phosphate: step 1/1. In terms of biological role, catalyzes the conversion of D-ribulose 5-phosphate to formate and 3,4-dihydroxy-2-butanone 4-phosphate. This Rhodospirillum rubrum (strain ATCC 11170 / ATH 1.1.1 / DSM 467 / LMG 4362 / NCIMB 8255 / S1) protein is 3,4-dihydroxy-2-butanone 4-phosphate synthase.